The primary structure comprises 645 residues: Cell pattern formation-associated protein stuA (645 aa).

A disordered region spans residues 1–52 (MNQMQPYADVHQPHMSTAAHAPASGPPAGLSHYSYPHQPSMMQPQQQQHQYG). Residues 18 to 52 (AAHAPASGPPAGLSHYSYPHQPSMMQPQQQQHQYG) show a composition bias toward low complexity. Residues 124–230 (RVTATLWEDE…HDIGALLYHP (107 aa)) form the HTH APSES-type domain. The H-T-H motif DNA-binding region spans 158–179 (GTKLLNVAGMTRGRRDGILKSE). Positions 246–645 (VDRNRRPDSM…HTLAAQRARR (400 aa)) are disordered. Polar residues-rich tracts occupy residues 254-271 (SMQTQQRYMAGPTTSQAP) and 279-288 (MTNSVGSAMS). Positions 317–330 (SASSMMGMGNQGSS) are enriched in low complexity. Polar residues predominate over residues 336 to 365 (ANVQQHPQGNQPLSIDTGLSNARSVPTTPA). Positions 469–481 (PYNGNRGPYGYNP) are enriched in low complexity. Composition is skewed to polar residues over residues 502–542 (SPHQ…NLYN) and 569–584 (YASQGYAPTNGVNSSG). The nuclear localization domain stretch occupies residues 585 to 613 (KRGRDEEDAETYRPDSVQGDDMGGLKRRK). The segment covering 586–597 (RGRDEEDAETYR) has biased composition (basic and acidic residues).

Belongs to the EFG1/PHD1/stuA family.

It is found in the nucleus. Its function is as follows. Transcription factor that regulates asexual reproduction. Binds the StuA-response elements (StRE) with the consensus sequence 5'-(A/T)CGCG(T/A)N(A/C)-3' at the promoters of target genes. Regulates the expression of several effector genes (AvrLm1, AvrLm6 and AvrLm4-7) during infection stage. The polypeptide is Cell pattern formation-associated protein stuA (Leptosphaeria maculans (strain JN3 / isolate v23.1.3 / race Av1-4-5-6-7-8) (Blackleg fungus)).